Here is a 639-residue protein sequence, read N- to C-terminus: UvrABC system protein C (639 aa).

Residues 20-97 enclose the GIY-YIG domain; that stretch reads ERSGVYRMFD…IKKFQPKFNI (78 aa). One can recognise a UVR domain in the interval 207–242; sequence KELQENLSRKMEELSSQMRFEEAAEIRDRIKALSYV.

The protein belongs to the UvrC family. In terms of assembly, interacts with UvrB in an incision complex.

It is found in the cytoplasm. Functionally, the UvrABC repair system catalyzes the recognition and processing of DNA lesions. UvrC both incises the 5' and 3' sides of the lesion. The N-terminal half is responsible for the 3' incision and the C-terminal half is responsible for the 5' incision. The polypeptide is UvrABC system protein C (Rickettsia conorii (strain ATCC VR-613 / Malish 7)).